Reading from the N-terminus, the 260-residue chain is Archaerhodopsin-1 (260 aa).

Positions 1 to 6 (MDPIAL) are excised as a propeptide. Residues 7-20 (TAAVGADLLGDGRP) lie on the Extracellular side of the membrane. Residues 21–42 (ETLWLGIGTLLMLIGTFYFIVK) traverse the membrane as a helical segment. Topologically, residues 43–51 (GWGVTDKEA) are cytoplasmic. The helical transmembrane segment at 52–73 (REYYSITILVPGIASAAYLSMF) threads the bilayer. Topologically, residues 74-91 (FGIGLTEVQVGSEMLDIY) are extracellular. Residues 92–113 (YARYADWLFTTPLLLLDLALLA) form a helical membrane-spanning segment. The Cytoplasmic segment spans residues 114–116 (KVD). Residues 117–139 (RVSIGTLVGVDALMIVTGLVGAL) traverse the membrane as a helical segment. Over 140–143 (SHTP) the chain is Extracellular. A helical transmembrane segment spans residues 144-172 (LARYTWWLFSTICMIVVLYFLATSLRAAA). The Cytoplasmic portion of the chain corresponds to 173–176 (KERG). A helical membrane pass occupies residues 177–204 (PEVASTFNTLTALVLVLWTAYPILWIIG). Over 205 to 212 (TEGAGVVG) the chain is Extracellular. Residues 213 to 245 (LGIETLLFMVLDVTAKVGFGFILLRSRAILGDT) form a helical membrane-spanning segment. N6-(retinylidene)lysine is present on Lys228. Residues 246–260 (EAPEPSAGAEASAAD) are Cytoplasmic-facing.

Belongs to the archaeal/bacterial/fungal opsin family.

Its subcellular location is the cell membrane. In terms of biological role, light-driven proton pump. It may interact with bacterioruberin in the claret membrane. This Halorubrum ezzemoulense (Halorubrum chaoviator) protein is Archaerhodopsin-1.